The primary structure comprises 451 residues: Phosphoglucosamine mutase (451 aa).

The active-site Phosphoserine intermediate is the S107. Mg(2+) contacts are provided by S107, D246, D248, and D250. The residue at position 107 (S107) is a Phosphoserine.

Belongs to the phosphohexose mutase family. The cofactor is Mg(2+). Activated by phosphorylation.

It carries out the reaction alpha-D-glucosamine 1-phosphate = D-glucosamine 6-phosphate. Catalyzes the conversion of glucosamine-6-phosphate to glucosamine-1-phosphate. The chain is Phosphoglucosamine mutase from Burkholderia vietnamiensis (strain G4 / LMG 22486) (Burkholderia cepacia (strain R1808)).